Reading from the N-terminus, the 142-residue chain is Mitochondrial import receptor subunit TOM22 homolog (142 aa).

A compositionally biased stretch (low complexity) spans 1-11 (MAAAVAAAGAG). The disordered stretch occupies residues 1-42 (MAAAVAAAGAGEPQSPDELLPKGDAEKPEEELEEDDDEELDE). Residue alanine 2 is modified to N-acetylalanine. Topologically, residues 2–83 (AAAVAAAGAG…AQKMYRFSRA (82 aa)) are cytoplasmic. At serine 15 the chain carries Phosphoserine. Residues 27–42 (KPEEELEEDDDEELDE) show a composition bias toward acidic residues. Residues 41–50 (DETLSERLWG) are import sequence; necessary for mitochondrion outer membrane localization and integration in the TOM complex. Position 43 is a phosphothreonine (threonine 43). Residue serine 45 is modified to Phosphoserine. Positions 83-103 (AALWIGTTSFMILVLPVVFET) are TMD; necessary for mitochondrion outer membrane localization and integration in the TOM complex. The helical transmembrane segment at 84-103 (ALWIGTTSFMILVLPVVFET) threads the bilayer. The Mitochondrial intermembrane portion of the chain corresponds to 104-142 (EKLQMEQQQQLQQRQILLGPNTGLSGGMPGALPSLPGKI). The C-tail signal; necessary for mitochondrion outer membrane localization and integration in the TOM complex stretch occupies residues 123–142 (PNTGLSGGMPGALPSLPGKI).

The protein belongs to the Tom22 family. As to quaternary structure, forms part of the preprotein translocase complex of the outer mitochondrial membrane (TOM complex) which consists of at least 7 different proteins (TOMM5, TOMM6, TOMM7, TOMM20, TOMM22, TOMM40 and TOMM70). Interacts with TOMM40. Interacts with PPP2R2B. As to expression, ubiquitous.

The protein resides in the mitochondrion outer membrane. Central receptor component of the translocase of the outer membrane of mitochondria (TOM complex) responsible for the recognition and translocation of cytosolically synthesized mitochondrial preproteins. Together with the peripheral receptor TOM20 functions as the transit peptide receptor and facilitates the movement of preproteins into the translocation pore. Required for the translocation across the mitochondrial outer membrane of cytochrome P450 monooxygenases. The polypeptide is Mitochondrial import receptor subunit TOM22 homolog (TOMM22) (Homo sapiens (Human)).